Reading from the N-terminus, the 205-residue chain is Small ribosomal subunit protein uS4 (205 aa).

The interval 1–46 is disordered; it reads MSKRHSAKYKIDRRMGENLWGRPKSPVNSRSYGPGQHGQRRKSKVS. The S4 RNA-binding domain occupies 94 to 154; sequence SRLDAIVYRA…EKSRNMALVL (61 aa).

It belongs to the universal ribosomal protein uS4 family. As to quaternary structure, part of the 30S ribosomal subunit. Contacts protein S5. The interaction surface between S4 and S5 is involved in control of translational fidelity.

Functionally, one of the primary rRNA binding proteins, it binds directly to 16S rRNA where it nucleates assembly of the body of the 30S subunit. In terms of biological role, with S5 and S12 plays an important role in translational accuracy. In Caulobacter vibrioides (strain ATCC 19089 / CIP 103742 / CB 15) (Caulobacter crescentus), this protein is Small ribosomal subunit protein uS4.